The primary structure comprises 376 residues: Serpin B9 (376 aa).

Met1 is modified (N-acetylmethionine).

This sequence belongs to the serpin family. Ov-serpin subfamily.

The protein resides in the cytoplasm. In terms of biological role, granzyme B inhibitor. The sequence is that of Serpin B9 (SERPINB9) from Homo sapiens (Human).